The following is a 340-amino-acid chain: Phosphoribosylformylglycinamidine cyclo-ligase (340 aa).

It belongs to the AIR synthase family.

The protein localises to the cytoplasm. It catalyses the reaction 2-formamido-N(1)-(5-O-phospho-beta-D-ribosyl)acetamidine + ATP = 5-amino-1-(5-phospho-beta-D-ribosyl)imidazole + ADP + phosphate + H(+). Its pathway is purine metabolism; IMP biosynthesis via de novo pathway; 5-amino-1-(5-phospho-D-ribosyl)imidazole from N(2)-formyl-N(1)-(5-phospho-D-ribosyl)glycinamide: step 2/2. In Streptococcus pneumoniae serotype 2 (strain D39 / NCTC 7466), this protein is Phosphoribosylformylglycinamidine cyclo-ligase.